The sequence spans 379 residues: Adenylosuccinate synthetase (379 aa).

GTP is bound by residues 11–17 (GDEGKGK) and 39–41 (GHT). The Proton acceptor role is filled by Asp12. Residues Asp12 and Gly39 each coordinate Mg(2+). IMP is bound by residues 12–15 (DEGK), 37–40 (NAGH), Thr127, Arg141, Gln223, Thr238, and Arg302. His40 functions as the Proton donor in the catalytic mechanism. 298 to 304 (TTTGRGR) contacts substrate. GTP is bound by residues Arg304 and 330 to 332 (KLD).

The protein belongs to the adenylosuccinate synthetase family. In terms of assembly, homodimer. It depends on Mg(2+) as a cofactor.

The protein resides in the cytoplasm. The enzyme catalyses IMP + L-aspartate + GTP = N(6)-(1,2-dicarboxyethyl)-AMP + GDP + phosphate + 2 H(+). The protein operates within purine metabolism; AMP biosynthesis via de novo pathway; AMP from IMP: step 1/2. Functionally, plays an important role in the de novo pathway of purine nucleotide biosynthesis. Catalyzes the first committed step in the biosynthesis of AMP from IMP. The polypeptide is Adenylosuccinate synthetase (Methanosarcina mazei (strain ATCC BAA-159 / DSM 3647 / Goe1 / Go1 / JCM 11833 / OCM 88) (Methanosarcina frisia)).